Here is a 121-residue protein sequence, read N- to C-terminus: Large ribosomal subunit protein uL14c (121 aa).

Belongs to the universal ribosomal protein uL14 family. As to quaternary structure, part of the 50S ribosomal subunit.

The protein localises to the plastid. It is found in the chloroplast. Its function is as follows. Binds to 23S rRNA. This chain is Large ribosomal subunit protein uL14c, found in Pelargonium hortorum (Common geranium).